A 389-amino-acid chain; its full sequence is Smad nuclear interacting protein 1 (389 aa).

Basic and acidic residues predominate over residues 1–10; it reads MKAGKSERER. The tract at residues 1–212 is disordered; it reads MKAGKSERER…GNKNKEVPVK (212 aa). Position 18 is a phosphoserine (Ser18). Lys28 participates in a covalent cross-link: Glycyl lysine isopeptide (Lys-Gly) (interchain with G-Cter in SUMO); alternate. Residue Lys28 forms a Glycyl lysine isopeptide (Lys-Gly) (interchain with G-Cter in SUMO1); alternate linkage. Lys28 is covalently cross-linked (Glycyl lysine isopeptide (Lys-Gly) (interchain with G-Cter in SUMO2); alternate). Residues 28-43 show a composition bias toward basic and acidic residues; it reads KQERLSPEPVAHRRPD. Residues Ser33 and Ser48 each carry the phosphoserine modification. Low complexity predominate over residues 54–72; the sequence is AESGSAGHRGSRARGASRS. Residues 73 to 95 are compositionally biased toward basic residues; the sequence is PAKKKSKSSGRRSKSPRTKRSRS. Position 95 is a phosphoserine (Ser95). Basic and acidic residues-rich tracts occupy residues 103–138 and 147–163; these read VKQEREDHPRRGREDRQHRELSEQEHRRARNSERDR and RSSDERPVSGQGRDRDS. Residue Lys104 forms a Glycyl lysine isopeptide (Lys-Gly) (interchain with G-Cter in SUMO2) linkage. The residue at position 149 (Ser149) is a Phosphoserine. Residues 166–197 are a coiled coil; that stretch reads LQAQEEERDFNNARRREHRQQNESAGAEAQEV. A Glycyl lysine isopeptide (Lys-Gly) (interchain with G-Cter in SUMO2) cross-link involves residue Lys214. Residues 272-335 form the FHA domain; it reads YLLGRHRRIA…NGTFLNNKRI (64 aa). The span at 363-373 shows a compositional bias: basic and acidic residues; sequence ESSDTSELDRK. Residues 363-389 form a disordered region; it reads ESSDTSELDRKEDEDEEEEEEMVSDSS. The span at 374-389 shows a compositional bias: acidic residues; sequence EDEDEEEEEEMVSDSS. Position 386 is a phosphoserine (Ser386).

As to quaternary structure, component of activated spliceosome complexes. Component of the minor spliceosome, which splices U12-type introns. Binds SMAD4 and CREBBP/EP300. Binds the SMAD1/OAZ1/PSMB4 complex. Interacts with DROSHA and SMARCA4. Component of the SNARP complex which consists at least of SNIP1, SNW1, THRAP3, BCLAF1 and PNN. Degraded by the proteasome upon binding to the SMAD1/OAZ1/PSMB4 complex.

Its subcellular location is the nucleus. Its function is as follows. Required for pre-mRNA splicing as component of the spliceosome. As a component of the minor spliceosome, involved in the splicing of U12-type introns in pre-mRNAs. Down-regulates NF-kappa-B signaling by competing with RELA for CREBBP/EP300 binding. Involved in the microRNA (miRNA) biogenesis. May be involved in cyclin-D1/CCND1 mRNA stability through the SNARP complex which associates with both the 3'end of the CCND1 gene and its mRNA. The sequence is that of Smad nuclear interacting protein 1 (Snip1) from Rattus norvegicus (Rat).